A 500-amino-acid chain; its full sequence is Probable malate:quinone oxidoreductase (500 aa).

It belongs to the MQO family. FAD is required as a cofactor.

It catalyses the reaction (S)-malate + a quinone = a quinol + oxaloacetate. Its pathway is carbohydrate metabolism; tricarboxylic acid cycle; oxaloacetate from (S)-malate (quinone route): step 1/1. This chain is Probable malate:quinone oxidoreductase, found in Bacillus anthracis (strain A0248).